The primary structure comprises 302 residues: Probable histone acetyltransferase Rv0428c (302 aa).

It catalyses the reaction L-lysyl-[histone] + acetyl-CoA = N(6)-acetyl-L-lysyl-[histone] + CoA + H(+). In terms of biological role, shows histone acetyl transferase (HAT) activity with recombinant eukaryotic H3 histone expressed in bacteria as substrate and acetyl-CoA as donor. May be involved in survival under stress conditions. This Mycobacterium tuberculosis (strain ATCC 25618 / H37Rv) protein is Probable histone acetyltransferase Rv0428c.